A 5148-amino-acid chain; its full sequence is E3 ubiquitin-protein ligase RNF213 (5148 aa).

Residues 38-48 (DNTLVVSSTPE) show a composition bias toward polar residues. Residues 38 to 341 (DNTLVVSSTP…QAAAPEPTSA (304 aa)) form a disordered region. Residues 69-78 (PGKELEKPEE) are compositionally biased toward basic and acidic residues. Residues 101 to 113 (GTISSSEAPSSGL) show a composition bias toward polar residues. Residues 130–146 (PQNQAQQGGAASQPGHP) show a composition bias toward low complexity. S196 carries the phosphoserine modification. Basic and acidic residues-rich tracts occupy residues 233–245 (SKGE…KKVP), 257–267 (AGKETGEDVRK), and 279–289 (KHGDQEAELKG). The segment covering 319–335 (AAAVKTQQAAAPQQAAA) has biased composition (low complexity). Residue K1128 forms a Glycyl lysine isopeptide (Lys-Gly) (interchain with G-Cter in SUMO2) linkage. ATP contacts are provided by residues 1957–1962 (GVGKSL), E2060, A2114, D2116, and R2177. Position 2234 is a phosphoserine (S2234). Residues K2460 and S2535 each contribute to the ATP site. Residues 3435–3465 (EEMEIETSQSKELAEEQMEVEDSEEMKKASD) adopt a coiled-coil conformation. The Zn(2+) site is built by C3947, C3950, C3962, H3964, C3967, C3970, C3982, C3985, C4451, and H4455. The RING-type zinc finger occupies 3947-3986 (CFICHGDAQDPVCLPCDHVYCLRCIQTWLIPGQMMCPYCL). The segment at 4429–4501 (MPEDLLVHAR…IRNNEDRTQT (73 aa)) adopts an RZ-type zinc-finger fold. C4462 functions as the Nucleophile; for E3 ubiquitin-lipopolysaccharide ligase activity in the catalytic mechanism. Residues C4471 and C4474 each coordinate Zn(2+).

This sequence belongs to the AAA ATPase family. As to quaternary structure, monomer. Interacts with UBE2L3/UBCH7; UBE2L3/UBCH7 is the most efficient ubiquitin-conjugating enzyme E2 for the ubiquitin ligase activity. Interacts with UBE2N/UBC13; promoting 'Lys-63'-linked ubiquitination of target proteins.

The protein resides in the cytoplasm. It is found in the cytosol. It localises to the lipid droplet. The enzyme catalyses S-ubiquitinyl-[E2 ubiquitin-conjugating enzyme]-L-cysteine + [acceptor protein]-L-lysine = [E2 ubiquitin-conjugating enzyme]-L-cysteine + N(6)-ubiquitinyl-[acceptor protein]-L-lysine.. The catalysed reaction is ATP + H2O = ADP + phosphate + H(+). The protein operates within protein modification; protein ubiquitination. In terms of biological role, atypical E3 ubiquitin ligase that can catalyze ubiquitination of both proteins and lipids, and which is involved in various processes, such as lipid metabolism, angiogenesis and cell-autonomous immunity. Acts as a key immune sensor by catalyzing ubiquitination of the lipid A moiety of bacterial lipopolysaccharide (LPS) via its RZ-type zinc-finger: restricts the proliferation of cytosolic bacteria, such as Salmonella, by generating the bacterial ubiquitin coat through the ubiquitination of LPS. Also acts indirectly by mediating the recruitment of the LUBAC complex, which conjugates linear polyubiquitin chains. Ubiquitination of LPS triggers cell-autonomous immunity, such as antibacterial autophagy, leading to degradation of the microbial invader. Involved in lipid metabolism by regulating fat storage and lipid droplet formation; act by inhibiting the lipolytic process. Also regulates lipotoxicity by inhibiting desaturation of fatty acids. Also acts as an E3 ubiquitin-protein ligase via its RING-type zinc finger: mediates 'Lys-63'-linked ubiquitination of target proteins. Involved in the non-canonical Wnt signaling pathway in vascular development: acts by mediating ubiquitination and degradation of FLNA and NFATC2 downstream of RSPO3, leading to inhibit the non-canonical Wnt signaling pathway and promoting vessel regression. Also has ATPase activity; ATPase activity is required for ubiquitination of LPS. The sequence is that of E3 ubiquitin-protein ligase RNF213 from Mus musculus (Mouse).